We begin with the raw amino-acid sequence, 1084 residues long: Cellulose synthase A catalytic subunit 2 [UDP-forming] (1084 aa).

The residue at position 1 (Met1) is an N-acetylmethionine. Residues 1–278 (MNTGGRLIAG…RSSRINPYRM (278 aa)) lie on the Cytoplasmic side of the membrane. Zn(2+) contacts are provided by Cys39, Cys42, Cys58, Cys61, Cys66, Cys69, Cys81, and Cys84. An RING-type; degenerate zinc finger spans residues 39 to 85 (CQICGDEIELTVSSELFVACNECAFPVCRPCYEYERREGNQACPQCK). The segment at 230 to 259 (IKHEGGNNGRGSNDDDELDDPDMPMMDEGR) is disordered. A helical membrane pass occupies residues 279–299 (LILCRLAILGLFFHYRILHPV). Over 300-301 (ND) the chain is Extracellular. The helical transmembrane segment at 302–322 (AYGLWLTSVICEIWFAVSWIL) threads the bilayer. At 323-867 (DQFPKWYPIE…INSVVYPWTS (545 aa)) the chain is on the cytoplasmic side. The UDP-alpha-D-glucose site is built by Ser361, Lys367, Glu368, and Asp397. The active site involves Asp397. Residues 451–477 (VRERRAMKRDYEEFKVKINALVATAQK) are a coiled coil. Residue Lys538 participates in UDP-alpha-D-glucose binding. Residues Lys539 and Asp563 each coordinate Mn(2+). Asp784 is an active-site residue. The chain crosses the membrane as a helical span at residues 868–888 (LPLIVYCSLPAVCLLTGKFIV). Over 889–893 (PEISN) the chain is Extracellular. A helical membrane pass occupies residues 894–914 (YAGILFMLMFISIAVTGILEM). Over 915–929 (QWGGVGIDDWWRNEQ) the chain is Cytoplasmic. A helical transmembrane segment spans residues 930-950 (FWVIGGASSHLFALFQGLLKV). The Extracellular portion of the chain corresponds to 951-979 (LAGVNTNFTVTSKAADDGAFSELYIFKWT). Asn957 carries N-linked (GlcNAc...) asparagine glycosylation. Residues 980 to 1000 (TLLIPPTTLLIINIIGVIVGV) form a helical membrane-spanning segment. At 1001 to 1011 (SDAISNGYDSW) the chain is on the cytoplasmic side. The helical transmembrane segment at 1012–1032 (GPLFGRLFFALWVIVHLYPFL) threads the bilayer. Residues 1033 to 1041 (KGMLGKQDK) lie on the Extracellular side of the membrane. Residues 1042–1062 (MPTIIVVWSILLASILTLLWV) traverse the membrane as a helical segment. Residues 1063 to 1084 (RVNPFVAKGGPVLEICGLNCGN) lie on the Cytoplasmic side of the membrane.

This sequence belongs to the glycosyltransferase 2 family. Plant cellulose synthase subfamily. Homodimer. Interaction through zinc finger domain. Requires Mn(2+) as cofactor. The cofactor is Zn(2+). As to expression, strongly and ubiquitously expressed. Localized in some dividing and expanding cells, as well as in vascular tissues.

It is found in the cell membrane. It carries out the reaction [(1-&gt;4)-beta-D-glucosyl](n) + UDP-alpha-D-glucose = [(1-&gt;4)-beta-D-glucosyl](n+1) + UDP + H(+). It functions in the pathway glycan metabolism; plant cellulose biosynthesis. Catalytic subunit of cellulose synthase terminal complexes ('rosettes'), required for beta-1,4-glucan microfibril crystallization, a major mechanism of the cell wall formation. Involved in the primary cell wall formation. The sequence is that of Cellulose synthase A catalytic subunit 2 [UDP-forming] from Arabidopsis thaliana (Mouse-ear cress).